We begin with the raw amino-acid sequence, 261 residues long: Rho-related GTP-binding protein RhoU (261 aa).

The tract at residues 1 to 48 is disordered; the sequence is MAPQQGRPALPARCEPPAAPPVPPRRERGGRGARGPGVSGGRGRAGGA. Over residues 7–16 the composition is skewed to low complexity; sequence RPALPARCEP. Over residues 32–48 the composition is skewed to gly residues; sequence GARGPGVSGGRGRAGGA. Residues 59 to 66, 106 to 110, and 164 to 167 each bind GTP; these read GDGAVGKT, DTAGQ, and TQSD. Residues Lys180 and Lys251 each participate in a glycyl lysine isopeptide (Lys-Gly) (interchain with G-Cter in ubiquitin) cross-link. A lipid anchor (S-palmitoyl cysteine) is attached at Cys259.

The protein belongs to the small GTPase superfamily. Rho family. As to quaternary structure, interacts with PAK1. Interacts with PAK3. Interacts with ARHGAP30 in a GTP-independent manner. In its GTP-loaded conformation, interacts with ARHGAP31. Interacts with PTK2B/PYK2. Interacts with PAK4; interaction protects RHOU from ubiquitination and subsequent degradation. It depends on Mg(2+) as a cofactor. Tyrosine phosphorylated by SRC in response to PTK2B/PYK2 activation. In terms of processing, ubiquitinated. 'Lys-48'-linked ubiquitination at Lys-180 and Lys-251 by the ECS(RAB40A) complex leading to its degradation.

Its subcellular location is the cell membrane. It localises to the golgi apparatus membrane. The protein localises to the cell junction. It is found in the focal adhesion. The protein resides in the cell projection. Its subcellular location is the podosome. Its function is as follows. Binds to and activates protein kinase PAK1. Plays a role in the regulation of cell morphology, cytoskeletal organization and focal adhesion assembly during cell migration. Also stimulates quiescent cells to reenter the cell cycle. Has no detectable GTPase activity but its high intrinsic guanine nucleotide exchange activity suggests it is constitutively GTP-bound. The polypeptide is Rho-related GTP-binding protein RhoU (Mus musculus (Mouse)).